Reading from the N-terminus, the 306-residue chain is Glutathione transport system permease protein GsiC (306 aa).

Residues 1 to 8 (MLNYVLKR) lie on the Cytoplasmic side of the membrane. The helical transmembrane segment at 9-29 (LLGLIPTLLIVAVLVFLFVHL) threads the bilayer. Residues 30–102 (LPGDPARLIA…SRFLPTLWLT (73 aa)) are Periplasmic-facing. In terms of domain architecture, ABC transmembrane type-1 spans 95–292 (FLPTLWLTIT…LEFILINLVV (198 aa)). Residues 103-123 (ITSMIWAVLFGMAIGIAAAVW) form a helical membrane-spanning segment. At 124 to 134 (RNRWPDRVGMT) the chain is on the cytoplasmic side. Residues 135 to 155 (LAVTGISFPAFALGMLLMQIF) traverse the membrane as a helical segment. Residues 156 to 168 (SVDLGWLPTVGAD) are Periplasmic-facing. A helical membrane pass occupies residues 169-189 (SWQHYILPSLTLGAAVASVMA). Topologically, residues 190–228 (RFTRSSFVDVLSEDYMRTARAKGVSETWVVLKHGLRNAM) are cytoplasmic. The chain crosses the membrane as a helical span at residues 229-249 (IPVVTMMGLQFGFLLGGSIVV). Residues 250 to 278 (EKVFNWPGLGRLLVDSVDMRDYPVIQAEV) are Periplasmic-facing. The chain crosses the membrane as a helical span at residues 279–299 (LLFSLEFILINLVVDVLYAAI). The Cytoplasmic portion of the chain corresponds to 300–306 (NPAIRYK).

This sequence belongs to the binding-protein-dependent transport system permease family. In terms of assembly, the complex is composed of two ATP-binding proteins (GsiA), two transmembrane proteins (GsiC and GsiD) and a solute-binding protein (GsiB).

It is found in the cell inner membrane. Its function is as follows. Part of the ABC transporter complex GsiABCD involved in glutathione import. Probably responsible for the translocation of the substrate across the membrane. The polypeptide is Glutathione transport system permease protein GsiC (Salmonella choleraesuis (strain SC-B67)).